Reading from the N-terminus, the 358-residue chain is MKRLLLLEDGSVFEGEAFGADVETSGEIVFSTGMTGYQESITDQSYNGQIITFTYPLIGNYGINRDDYESIRPTCKGVVIYEWAEYPSNWRQQMTLDEFLKLKGIPGISGIDTRALTKIIRKHGTMKACLINEGNSIHEALENLQKSVLLNDQIEQVSTKLAYASPGVGKNIVLVDFGLKHSILRELSQRQCHITVVPHTTTAQEILNLNPDGVLLSNGPGNPEQLPNALQMIQEIQGKIPIFGICMGHQLFAKANGAKTYKMTFGHRGFNHAVRHLQTGQVDFTSQNHGYAVSREDFPEALFITHEEINDKTVEGVRHKYYPAFSVQFHPDAAPGPHDTSYLFDEFINMIDDFQQKS.

The segment at 1–168 (MKRLLLLEDG…TKLAYASPGV (168 aa)) is CPSase. L-glutamine contacts are provided by Ser45, Gly219, and Gly221. The Glutamine amidotransferase type-1 domain maps to 171–357 (NIVLVDFGLK…INMIDDFQQK (187 aa)). The active-site Nucleophile is Cys246. Met247, Gln250, Asn288, Gly290, and Tyr291 together coordinate L-glutamine. Catalysis depends on residues His330 and Asp332.

Belongs to the CarA family. Composed of two chains; the small (or glutamine) chain promotes the hydrolysis of glutamine to ammonia, which is used by the large (or ammonia) chain to synthesize carbamoyl phosphate. Tetramer of heterodimers (alpha,beta)4.

The catalysed reaction is hydrogencarbonate + L-glutamine + 2 ATP + H2O = carbamoyl phosphate + L-glutamate + 2 ADP + phosphate + 2 H(+). The enzyme catalyses L-glutamine + H2O = L-glutamate + NH4(+). Its pathway is amino-acid biosynthesis; L-arginine biosynthesis; carbamoyl phosphate from bicarbonate: step 1/1. It participates in pyrimidine metabolism; UMP biosynthesis via de novo pathway; (S)-dihydroorotate from bicarbonate: step 1/3. In terms of biological role, small subunit of the glutamine-dependent carbamoyl phosphate synthetase (CPSase). CPSase catalyzes the formation of carbamoyl phosphate from the ammonia moiety of glutamine, carbonate, and phosphate donated by ATP, constituting the first step of 2 biosynthetic pathways, one leading to arginine and/or urea and the other to pyrimidine nucleotides. The small subunit (glutamine amidotransferase) binds and cleaves glutamine to supply the large subunit with the substrate ammonia. The sequence is that of Carbamoyl phosphate synthase small chain from Streptococcus agalactiae serotype III (strain NEM316).